The sequence spans 1222 residues: Alpha-mannosidase D (1222 aa).

Positions 1 to 21 (MESSKFVKIIWVFGIWILVFT) are cleaved as a signal peptide. Residues 22–1170 (FLIIYNNYDY…KYNRPNHLAL (1149 aa)) lie on the Extracellular side of the membrane. Residues H71 and D73 each contribute to the Zn(2+) site. The N-linked (GlcNAc...) asparagine glycan is linked to N175. Zn(2+)-binding residues include D185 and H453. D185 serves as the catalytic Nucleophile. N-linked (GlcNAc...) asparagine glycosylation is found at N492, N496, N547, N551, N566, N613, N665, N768, N785, N952, N981, N1069, and N1084. The segment covering 493 to 549 (KSNNKTNNNNNNNNKNNNNNNNNNNNNNNNLKNTNSISTTGSSSSSGSGSSNNNNNT) has biased composition (low complexity). Residues 493-554 (KSNNKTNNNN…NNNNTVNKSE (62 aa)) are disordered. Residues 1171 to 1191 (ILSLSIGIPAGILIIVIALVV) traverse the membrane as a helical segment. The Cytoplasmic portion of the chain corresponds to 1192-1222 (TYKKRKNRKTLTSSNSSSNLIQQEDQTDYSP). A compositionally biased stretch (low complexity) spans 1202–1211 (LTSSNSSSNL). Residues 1202–1222 (LTSSNSSSNLIQQEDQTDYSP) are disordered. Residues 1212–1222 (IQQEDQTDYSP) show a composition bias toward polar residues.

It belongs to the glycosyl hydrolase 38 family. Zn(2+) serves as cofactor.

The protein localises to the membrane. The enzyme catalyses Hydrolysis of terminal, non-reducing alpha-D-mannose residues in alpha-D-mannosides.. The protein is Alpha-mannosidase D (manD) of Dictyostelium discoideum (Social amoeba).